A 417-amino-acid polypeptide reads, in one-letter code: Hydroxysteroid dehydrogenase-like protein 2 (417 aa).

NADP(+) contacts are provided by residues 17 to 23, K42, and D74; that span reads GASRGIG. Catalysis depends on Y168, which acts as the Proton acceptor. K172 contributes to the NADP(+) binding site. One can recognise an SCP2 domain in the interval 306 to 414; the sequence is SSPLQETFKA…KLEKILGQMN (109 aa).

Belongs to the short-chain dehydrogenases/reductases (SDR) family.

Its subcellular location is the peroxisome. The protein localises to the mitochondrion. Its function is as follows. Has apparently no steroid dehydrogenase activity. Might act as a metabolic regulator that affects systemic adaptation to nutritional cues. This chain is Hydroxysteroid dehydrogenase-like protein 2 (hsdl2), found in Xenopus tropicalis (Western clawed frog).